Here is a 636-residue protein sequence, read N- to C-terminus: Transcriptional repressor CTCFL (636 aa).

Disordered stretches follow at residues 17-38 (KEQK…VQRV), 160-195 (ENPE…DKRE), and 222-257 (LEEQ…PQSF). Acidic residues predominate over residues 160 to 170 (ENPELTPDLDE). Over residues 242 to 251 (AKPKRRRQTK) the composition is skewed to basic residues. C2H2-type zinc fingers lie at residues 257 to 279 (FQCD…IKIH), 285 to 307 (HLCH…VNTH), 313 to 336 (HKCR…RYKH), 342 to 364 (FKCS…IRSH), 370 to 392 (FQCC…MRTH), 398 to 421 (YECP…AQKH), 428 to 451 (YECP…RNLH), 458 to 480 (MKCR…QRTH), 486 to 508 (FKCK…MRMH), 514 to 537 (FSCL…RKYH), and 546 to 572 (HLCL…DPEH). The interval 562–624 (QRHRKKCDPE…AAGSQSPDHG (63 aa)) is disordered. The span at 568 to 583 (CDPEHETLAPNKDRRP) shows a compositional bias: basic and acidic residues.

This sequence belongs to the CTCF zinc-finger protein family. As to quaternary structure, interacts with histones, PRMT7 and SETD1A. Interacts (via N-terminus) with BAG6/BAT3. Testis-specific.

The protein localises to the cytoplasm. The protein resides in the nucleus. Testis-specific DNA binding protein responsible for insulator function, nuclear architecture and transcriptional control, which probably acts by recruiting epigenetic chromatin modifiers. Plays a key role in gene imprinting in male germline, by participating in the establishment of differential methylation at the IGF2/H19 imprinted control region (ICR). Directly binds the unmethylated H19 ICR and recruits the PRMT7 methyltransferase, leading to methylate histone H4 'Arg-3' to form H4R3sme2. This probably leads to recruit de novo DNA methyltransferases at these sites. Seems to act as tumor suppressor. In association with DNMT1 and DNMT3B, involved in activation of BAG1 gene expression by binding to its promoter. Required for dimethylation of H3 lysine 4 (H3K4me2) of MYC and BRCA1 promoters. The sequence is that of Transcriptional repressor CTCFL (Ctcfl) from Mus musculus (Mouse).